The following is a 232-amino-acid chain: tRNA (guanine-N(1)-)-methyltransferase (232 aa).

Glycine 116 serves as a coordination point for S-adenosyl-L-methionine.

This sequence belongs to the RNA methyltransferase TrmD family. In terms of assembly, homodimer.

It is found in the cytoplasm. The enzyme catalyses guanosine(37) in tRNA + S-adenosyl-L-methionine = N(1)-methylguanosine(37) in tRNA + S-adenosyl-L-homocysteine + H(+). Its function is as follows. Specifically methylates guanosine-37 in various tRNAs. In Chlorobium luteolum (strain DSM 273 / BCRC 81028 / 2530) (Pelodictyon luteolum), this protein is tRNA (guanine-N(1)-)-methyltransferase.